The primary structure comprises 423 residues: Glycine amidinotransferase, mitochondrial (423 aa).

The N-terminal 43 residues, 1 to 43 (MLRVRCLRGGSRGAEALHYIGSRLGRTVTGWVQRTFQSTQAAT), are a transit peptide targeting the mitochondrion. Residues Ser-46 and Ser-49 each carry the phosphoserine modification. An arginine-binding site is contributed by Asp-170. Catalysis depends on residues Asp-254 and His-303. 4 residues coordinate arginine: Asp-305, Arg-322, Ser-354, and Ser-355. Lys-385 is modified (N6-acetyllysine). Residue Cys-407 is the Amidino-cysteine intermediate of the active site.

This sequence belongs to the amidinotransferase family. In terms of assembly, homodimer.

Its subcellular location is the mitochondrion inner membrane. The catalysed reaction is L-arginine + glycine = guanidinoacetate + L-ornithine. It carries out the reaction 4-aminobutanoate + L-arginine = 4-guanidinobutanoate + L-ornithine. The enzyme catalyses beta-alanine + L-arginine = 3-guanidinopropanoate + L-ornithine. It catalyses the reaction taurine + L-arginine = taurocyamine + L-ornithine. Its pathway is amine and polyamine biosynthesis; creatine biosynthesis; creatine from L-arginine and glycine: step 1/2. In terms of biological role, transamidinase that catalyzes the transfer of the amidino group of L-arginine onto the amino moiety of acceptor metabolites such as glycine, beta-alanine, gamma-aminobutyric acid (GABA) and taurine yielding the corresponding guanidine derivatives. Catalyzes the rate-limiting step of creatine biosynthesis, namely the transfer of the amidino group from L-arginine to glycine to generate guanidinoacetate, which is then methylated by GAMT to form creatine. Provides creatine as a source for ATP generation in tissues with high energy demands, in particular skeletal muscle, heart and brain. The sequence is that of Glycine amidinotransferase, mitochondrial (GATM) from Bos taurus (Bovine).